Here is a 528-residue protein sequence, read N- to C-terminus: Inositol-3-phosphate synthase (528 aa).

NAD(+) is bound by residues Gly-66, Gly-67, Asn-68, Asn-69, Asp-140, Gln-187, Arg-190, Thr-228, Ala-229, Asn-230, Thr-231, Gly-279, Asp-304, Ser-307, Asn-338, Asn-339, Asp-340, Lys-353, Gly-392, Asp-393, Asp-421, and Ser-422.

The protein belongs to the myo-inositol 1-phosphate synthase family. It depends on NAD(+) as a cofactor.

The protein localises to the cytoplasm. It is found in the cytosol. The enzyme catalyses D-glucose 6-phosphate = 1D-myo-inositol 3-phosphate. Its pathway is polyol metabolism; myo-inositol biosynthesis; myo-inositol from D-glucose 6-phosphate: step 1/2. Its activity is regulated as follows. Activated by ammonium ions. In terms of biological role, key enzyme in myo-inositol biosynthesis pathway that catalyzes the conversion of glucose 6-phosphate to 1-myo-inositol 1-phosphate in a NAD-dependent manner. Rate-limiting enzyme in the synthesis of all inositol-containing compounds. De novo-synthesized myo-inositol is essential for incorporation into GPI (glycosylphosphatidylinositol) glycolipids in the bloodstream form. This is Inositol-3-phosphate synthase from Trypanosoma brucei brucei.